We begin with the raw amino-acid sequence, 219 residues long: Probable nicotinate-nucleotide adenylyltransferase (219 aa).

It belongs to the NadD family.

The enzyme catalyses nicotinate beta-D-ribonucleotide + ATP + H(+) = deamido-NAD(+) + diphosphate. It participates in cofactor biosynthesis; NAD(+) biosynthesis; deamido-NAD(+) from nicotinate D-ribonucleotide: step 1/1. In terms of biological role, catalyzes the reversible adenylation of nicotinate mononucleotide (NaMN) to nicotinic acid adenine dinucleotide (NaAD). The chain is Probable nicotinate-nucleotide adenylyltransferase from Hahella chejuensis (strain KCTC 2396).